The chain runs to 729 residues: 1,4-alpha-glucan branching enzyme GlgB (729 aa).

The active-site Nucleophile is Asp-409. Glu-462 serves as the catalytic Proton donor.

The protein belongs to the glycosyl hydrolase 13 family. GlgB subfamily. Monomer.

It carries out the reaction Transfers a segment of a (1-&gt;4)-alpha-D-glucan chain to a primary hydroxy group in a similar glucan chain.. Its pathway is glycan biosynthesis; glycogen biosynthesis. Functionally, catalyzes the formation of the alpha-1,6-glucosidic linkages in glycogen by scission of a 1,4-alpha-linked oligosaccharide from growing alpha-1,4-glucan chains and the subsequent attachment of the oligosaccharide to the alpha-1,6 position. In Saccharophagus degradans (strain 2-40 / ATCC 43961 / DSM 17024), this protein is 1,4-alpha-glucan branching enzyme GlgB.